Here is a 955-residue protein sequence, read N- to C-terminus: Protein translocase subunit SecA (955 aa).

ATP is bound by residues Gln90, 108 to 112 (GEGKT), and Asp509. The disordered stretch occupies residues 537-571 (EGHRPPVPLQRSGAEGGGGFAAKAAPASGPHGHAP). Residues 557-571 (AAKAAPASGPHGHAP) show a composition bias toward low complexity.

This sequence belongs to the SecA family. In terms of assembly, monomer and homodimer. Part of the essential Sec protein translocation apparatus which comprises SecA, SecYEG and auxiliary proteins SecDF. Other proteins may also be involved.

It localises to the cell inner membrane. The protein localises to the cellular thylakoid membrane. Its subcellular location is the cytoplasm. It carries out the reaction ATP + H2O + cellular proteinSide 1 = ADP + phosphate + cellular proteinSide 2.. Its function is as follows. Part of the Sec protein translocase complex. Interacts with the SecYEG preprotein conducting channel. Has a central role in coupling the hydrolysis of ATP to the transfer of proteins into and across the cell membrane, serving as an ATP-driven molecular motor driving the stepwise translocation of polypeptide chains across the membrane. In terms of biological role, probably participates in protein translocation into and across both the cytoplasmic and thylakoid membranes in cyanobacterial cells. The polypeptide is Protein translocase subunit SecA (Synechococcus sp. (strain WH7803)).